Here is a 167-residue protein sequence, read N- to C-terminus: Large ribosomal subunit protein uL23 (167 aa).

Positions 1–118 are large ribosomal subunit protein uL23; the sequence is MNVNEIIKGP…TEEKAKIAKK (118 aa). 2 disordered regions span residues 91–112 and 136–167; these read FEDESPQDQKDSETVSENTEEK and KQAELAKKDSETNENQEKRIENQTENQENSAN. Composition is skewed to basic and acidic residues over residues 97-112 and 136-157; these read QDQKDSETVSENTEEK and KQAELAKKDSETNENQEKRIEN. The interval 119-167 is unknown; it reads KAELEAKNKEIAEKLAKKQAELAKKDSETNENQEKRIENQTENQENSAN. Residues 158–167 are compositionally biased toward polar residues; that stretch reads QTENQENSAN.

Belongs to the universal ribosomal protein uL23 family. In terms of assembly, part of the 50S ribosomal subunit. Contacts protein L29, and trigger factor when it is bound to the ribosome.

In terms of biological role, one of the early assembly proteins it binds 23S rRNA. One of the proteins that surrounds the polypeptide exit tunnel on the outside of the ribosome. Forms the main docking site for trigger factor binding to the ribosome. This is Large ribosomal subunit protein uL23 from Mesomycoplasma hyopneumoniae (strain J / ATCC 25934 / NCTC 10110) (Mycoplasma hyopneumoniae).